A 359-amino-acid chain; its full sequence is MKAYLVLATGETFAGEIANAKEDVYGEVVFFTGMTGYQEVLSDPSFKGQLVVFTYPLIGNYGINASDFESKEPQAAGLIVSEQSEEGHHYEATQSLQQFCDQHQLPLLTGIDTRAVVKRIREQGDMPAVITTDLSRVSFEEWVPLSERALVDEVSTKKVETFEGNGPHIVLIDYGFKQSILNSLLKRDCQVTIVPYDVSFEVVQELNPDGLLFSNGPGDPKQIEDRLPTIYRLASTYPSLGICLGHQLLALAFGADTEKLRFGHRGANQPVINLKSNRVYMTSQNHSYVVKEDSLQRTDWDATFKNINDGSIEGLTHKYLPIQTVQFHPEAHPGPSDSDEIFHSFIDDVAAKGREKTYA.

Residues 1–168 (MKAYLVLATG…VETFEGNGPH (168 aa)) form a CPSase region. Residues Ser45, Gly216, and Gly218 each contribute to the L-glutamine site. Residues 168-355 (HIVLIDYGFK…IDDVAAKGRE (188 aa)) form the Glutamine amidotransferase type-1 domain. The active-site Nucleophile is the Cys243. The L-glutamine site is built by Leu244, Gln247, Asn285, and Tyr288. Residues His328 and Glu330 contribute to the active site.

It belongs to the CarA family. In terms of assembly, composed of two chains; the small (or glutamine) chain promotes the hydrolysis of glutamine to ammonia, which is used by the large (or ammonia) chain to synthesize carbamoyl phosphate. Tetramer of heterodimers (alpha,beta)4.

The enzyme catalyses hydrogencarbonate + L-glutamine + 2 ATP + H2O = carbamoyl phosphate + L-glutamate + 2 ADP + phosphate + 2 H(+). It catalyses the reaction L-glutamine + H2O = L-glutamate + NH4(+). The protein operates within amino-acid biosynthesis; L-arginine biosynthesis; carbamoyl phosphate from bicarbonate: step 1/1. In terms of biological role, small subunit of the glutamine-dependent carbamoyl phosphate synthetase (CPSase). CPSase catalyzes the formation of carbamoyl phosphate from the ammonia moiety of glutamine, carbonate, and phosphate donated by ATP, constituting the first step of the biosynthetic pathway leading to arginine and/or urea. The small subunit (glutamine amidotransferase) binds and cleaves glutamine to supply the large subunit with the substrate ammonia. This Halalkalibacterium halodurans (strain ATCC BAA-125 / DSM 18197 / FERM 7344 / JCM 9153 / C-125) (Bacillus halodurans) protein is Carbamoyl phosphate synthase arginine-specific small chain.